Reading from the N-terminus, the 235-residue chain is Large ribosomal subunit protein uL1 (235 aa).

This sequence belongs to the universal ribosomal protein uL1 family. In terms of assembly, part of the 50S ribosomal subunit.

In terms of biological role, binds directly to 23S rRNA. The L1 stalk is quite mobile in the ribosome, and is involved in E site tRNA release. Protein L1 is also a translational repressor protein, it controls the translation of the L11 operon by binding to its mRNA. The chain is Large ribosomal subunit protein uL1 from Prochlorococcus marinus (strain MIT 9215).